We begin with the raw amino-acid sequence, 293 residues long: Acetylglutamate kinase (293 aa).

Substrate-binding positions include 70–71 (GG), Arg-92, and Asn-186.

Belongs to the acetylglutamate kinase family. ArgB subfamily.

The protein resides in the cytoplasm. The catalysed reaction is N-acetyl-L-glutamate + ATP = N-acetyl-L-glutamyl 5-phosphate + ADP. It participates in amino-acid biosynthesis; L-arginine biosynthesis; N(2)-acetyl-L-ornithine from L-glutamate: step 2/4. Functionally, catalyzes the ATP-dependent phosphorylation of N-acetyl-L-glutamate. The protein is Acetylglutamate kinase of Parasynechococcus marenigrum (strain WH8102).